Here is a 136-residue protein sequence, read N- to C-terminus: Cytokine-like protein 1 (136 aa).

A signal peptide spans 1–22 (MRTPGPLPVLLLLLAGAPAARP).

Specifically expressed in CD34+ hematopoietic cells.

Its subcellular location is the secreted. The chain is Cytokine-like protein 1 (CYTL1) from Homo sapiens (Human).